The sequence spans 32 residues: Conotoxin Cltx-4 (32 aa).

4-hydroxyproline is present on residues P2, P24, P28, and P30. S32 carries the serine amide modification.

In terms of processing, contains 4 disulfide bonds. In terms of tissue distribution, expressed by the venom duct.

The protein localises to the secreted. This Californiconus californicus (California cone) protein is Conotoxin Cltx-4.